We begin with the raw amino-acid sequence, 482 residues long: U2 small nuclear ribonucleoprotein auxiliary factor 35 kDa subunit-related protein 2 (482 aa).

A disordered region spans residues 1–59; the sequence is MAAPEKMTFPEKPSHKKYRAALKKEKRKKRRQELARLRDSGLSQKEEEEDTFIEEQQLE. The span at 14–31 shows a compositional bias: basic residues; it reads SHKKYRAALKKEKRKKRR. Lysine 45 is covalently cross-linked (Glycyl lysine isopeptide (Lys-Gly) (interchain with G-Cter in SUMO2)). Acidic residues predominate over residues 46–58; the sequence is EEEEDTFIEEQQL. Lysine 62 participates in a covalent cross-link: Glycyl lysine isopeptide (Lys-Gly) (interchain with G-Cter in SUMO2). Residues 115-135 are disordered; it reads QRKEREEEEQKRQEKKEKEEA. A C3H1-type 1 zinc finger spans residues 166 to 194; that stretch reads EKDRANCPFYSKTGACRFGDRCSRKHNFP. One can recognise an RRM domain in the interval 198–304; that stretch reads PTLLIKSMFT…RQLQCEFCPV (107 aa). The segment at 306-333 adopts a C3H1-type 2 zinc-finger fold; that stretch reads RWKMAICGLFEIQQCPRGKHCNFLHVFR. Position 349 is a phosphoserine (serine 349). The interval 351–482 is disordered; it reads DRTGSSFGKN…DRTVQSPKSK (132 aa). Basic and acidic residues-rich tracts occupy residues 360–375 and 383–398; these read NSERRERMGHHDDYYS and PSPDHSYKRNGESERK. A Phosphoserine modification is found at serine 384. The segment covering 399-412 has biased composition (basic residues); it reads SSRHRGKKSHKRTS. The span at 413–435 shows a compositional bias: basic and acidic residues; it reads KSRERHNSRSRGRNRDRSRDRSR. A compositionally biased stretch (basic residues) spans 436–454; it reads GRGSRSRSRSRSRRSRRSR.

As to quaternary structure, component of the U11/U12 snRNPs that are part of the U12-type spliceosome. Interacts (via RS domain) with SRSF1 and SRSF2. Interacts with U2AF2/U2AF65. In terms of processing, phosphorylated in the RS domain by SRPK1. As to expression, widely expressed.

The protein resides in the nucleus. In terms of biological role, pre-mRNA-binding protein required for splicing of both U2- and U12-type introns. Selectively interacts with the 3'-splice site of U2- and U12-type pre-mRNAs and promotes different steps in U2 and U12 intron splicing. Recruited to U12 pre-mRNAs in an ATP-dependent manner and is required for assembly of the pre-spliceosome, a precursor to other spliceosomal complexes. For U2-type introns, it is selectively and specifically required for the second step of splicing. The sequence is that of U2 small nuclear ribonucleoprotein auxiliary factor 35 kDa subunit-related protein 2 (ZRSR2) from Homo sapiens (Human).